Reading from the N-terminus, the 1219-residue chain is Myosin-5 (1219 aa).

Residues 1-12 (MAILKRGARKKV) are compositionally biased toward basic residues. The segment at 1 to 20 (MAILKRGARKKVHQEPAKRS) is disordered. The Myosin motor domain maps to 36 to 715 (VGVSDLTLLS…TLFALEHMRD (680 aa)). 129–136 (GESGAGKT) is an ATP binding site. S357 is subject to Phosphoserine. Y359 bears the Phosphotyrosine mark. The actin-binding stretch occupies residues 404–486 (SIGILDIYGF…PGIFAAMNDS (83 aa)). 2 consecutive IQ domains span residues 719–739 (HNMA…RIDA) and 740–765 (ATKI…YGTK). A TH1 domain is found at 771–961 (KERRSMSLLG…TISVRRGNPP (191 aa)). S777 bears the Phosphoserine mark. The segment covering 951 to 964 (STISVRRGNPPNSQ) has biased composition (polar residues). Disordered regions lie at residues 951–1106 (STIS…SELP) and 1139–1167 (TAYM…VLNS). Over residues 974-984 (SISSGYHASSS) the composition is skewed to low complexity. The residue at position 992 (S992) is a Phosphoserine. Over residues 1030–1041 (NPASTLTASQSN) the composition is skewed to polar residues. Residues 1048-1063 (TAATRATPAATPAAAA) show a composition bias toward low complexity. Residues 1072–1083 (IPPPPPPPPPSS) show a composition bias toward pro residues. Residues 1085-1147 (PKEPMFEAAY…PTAYMKPHSG (63 aa)) enclose the SH3 domain. Residue S1205 is modified to Phosphoserine.

The protein belongs to the TRAFAC class myosin-kinesin ATPase superfamily. Myosin family. In terms of assembly, interacts (via myosin motor domain) with SHE4; this interaction is important for proper localization and may regulate the interaction of the motor domain with actin. Interacts (via SH3 domain) with VRP1; this interaction is required for localization to sites of polarized growth and may regulate the interaction of the tail domain with actin. Interacts (via SH3 domain) with PAN1; this interaction is important for late stages of endocytopsis. Interacts (via SH3 domain) with BBC1 and LAS17. Interacts (via C-terminal acidic tail) with ARC19 and ARC40; ARC19 and ARC40 are Arp2/3 complex subunits. Interacts with BZZ1, PKH1, PKH2, YPK1 and YPK2. In terms of processing, phosphorylation of the TEDS site (Ser-357) is required for the polarization of the actin cytoskeleton and for ligand-induced, but not for constitutive internalization of STE2. Phosphorylation probably activates the myosin-I ATPase activity. Ser-357 is phosphorylated by YPK2 in vitro.

It localises to the cytoplasm. The protein resides in the cytoskeleton. The protein localises to the actin patch. One of two redundant type-I myosins implicated in the organization of the actin cytoskeleton. Required for proper actin cytoskeleton polarization and for the internalization step in endocytosis. At the cell cortex, assembles in patch-like structures together with proteins from the actin-polymerizing machinery and promotes actin assembly. Functions redundantly with LAS17 as actin nucleation-promoting factor (NPF) for the Arp2/3 complex. Motor domain phosphorylation by PAK kinases CLA4 and STE20 promotes CDC42-regulated actin assembly. Functions together with the NPF PAN1 in late stages of endocytosis. Motor domain phosphorylation by PDK1 kinases PKH1 and PKH2, and by SGK kinases YPK1 and YPK2, promotes ligand-induced, but not constitutive endocytosis of the G protein-coupled receptor STE2. The polypeptide is Myosin-5 (MYO5) (Saccharomyces cerevisiae (strain YJM789) (Baker's yeast)).